Here is a 288-residue protein sequence, read N- to C-terminus: Pyridoxal kinase PdxY (288 aa).

Residues serine 12 and 47 to 48 (TQ) contribute to the substrate site. Residues aspartate 114, glutamate 151, lysine 184, and 211 to 214 (RPLL) contribute to the ATP site. Position 225 (aspartate 225) interacts with substrate.

It belongs to the pyridoxine kinase family. PdxY subfamily. In terms of assembly, homodimer. It depends on Mg(2+) as a cofactor.

It carries out the reaction pyridoxal + ATP = pyridoxal 5'-phosphate + ADP + H(+). It participates in cofactor metabolism; pyridoxal 5'-phosphate salvage; pyridoxal 5'-phosphate from pyridoxal: step 1/1. Functionally, pyridoxal kinase involved in the salvage pathway of pyridoxal 5'-phosphate (PLP). Catalyzes the phosphorylation of pyridoxal to PLP. The polypeptide is Pyridoxal kinase PdxY (Pseudomonas aeruginosa (strain UCBPP-PA14)).